Consider the following 96-residue polypeptide: Aspartyl/glutamyl-tRNA(Asn/Gln) amidotransferase subunit C (96 aa).

Belongs to the GatC family. As to quaternary structure, heterotrimer of A, B and C subunits.

The catalysed reaction is L-glutamyl-tRNA(Gln) + L-glutamine + ATP + H2O = L-glutaminyl-tRNA(Gln) + L-glutamate + ADP + phosphate + H(+). It catalyses the reaction L-aspartyl-tRNA(Asn) + L-glutamine + ATP + H2O = L-asparaginyl-tRNA(Asn) + L-glutamate + ADP + phosphate + 2 H(+). In terms of biological role, allows the formation of correctly charged Asn-tRNA(Asn) or Gln-tRNA(Gln) through the transamidation of misacylated Asp-tRNA(Asn) or Glu-tRNA(Gln) in organisms which lack either or both of asparaginyl-tRNA or glutaminyl-tRNA synthetases. The reaction takes place in the presence of glutamine and ATP through an activated phospho-Asp-tRNA(Asn) or phospho-Glu-tRNA(Gln). This Exiguobacterium sp. (strain ATCC BAA-1283 / AT1b) protein is Aspartyl/glutamyl-tRNA(Asn/Gln) amidotransferase subunit C.